Consider the following 229-residue polypeptide: Ras-related protein Rab-33B (229 aa).

8 residues coordinate GTP: Asn-43, Val-44, Gly-45, Lys-46, Thr-47, Cys-48, Thr-62, and Thr-65. Residue Thr-47 participates in Mg(2+) binding. The short motif at 56–68 (GRFPDRTEATIGV) is the Switch 1 element. Residues Thr-65 and Asp-88 each contribute to the Mg(2+) site. The Switch 2 motif lies at 89-108 (TAGQERFRKSMVQHYYRNVH). GTP-binding residues include Gly-91, Asn-148, Lys-149, Asp-151, Ala-179, and Lys-180. Residues Cys-227 and Cys-229 are each lipidated (S-geranylgeranyl cysteine). Position 229 is a cysteine methyl ester (Cys-229).

Belongs to the small GTPase superfamily. Rab family. As to quaternary structure, interacts (GTP- and GDP-bound forms) with ATG16L1; the complex consists of a tetramer where two RAB33B molecules bind independently one molecule of the ATG16L1 homodimer; the interaction promotes ATG12-ATG5-ATG16L1 complex recruitment to phagophores. Interacts with ATG16L2; however interaction is approximately hundred times lower than for ATG16L1. Interacts with RIC1 (via C-terminus domain); the interaction is direct with a preference for RAB33B-GTP. Interacts with RGP1. Mg(2+) serves as cofactor. In terms of processing, prenylated.

The protein localises to the golgi apparatus membrane. The protein resides in the golgi apparatus. Its subcellular location is the cis-Golgi network. It is found in the preautophagosomal structure membrane. It catalyses the reaction GTP + H2O = GDP + phosphate + H(+). Regulated by guanine nucleotide exchange factors (GEFs) which promote the exchange of bound GDP for free GTP. Regulated by GTPase activating proteins (GAPs) such as SGSM2 which increase the GTP hydrolysis activity. Inhibited by GDP dissociation inhibitors (GDIs). The small GTPases Rab are key regulators of intracellular membrane trafficking, from the formation of transport vesicles to their fusion with membranes. Rabs cycle between an inactive GDP-bound form and an active GTP-bound form that is able to recruit to membranes different sets of downstream effectors directly responsible for vesicle formation, movement, tethering and fusion. RAB33B acts, in coordination with RAB6A, to regulate intra-Golgi retrograde trafficking. Participates in autophagosome formation by recruiting the ATG12-ATG5-ATG16L1 complex to phagophores, probably in a nucleotide-independent manner. This is Ras-related protein Rab-33B from Homo sapiens (Human).